The primary structure comprises 408 residues: MELSSACNLSLKPNYYYYPTSLFPSNNSYNNLKASSYYQTQRPIKCCSYSPSKYCSTKKLQTTHLLGLYAKHKCLKPFSIGHLPRPNSLTAWSHQSEFPSTIVTKGSNFGHASWKFVRPIPFVAVSIICTSLFGAELLKNPNLFSWQLMFDAFQGLVVILLYHIYINGLNQIYDLESDRINKPDLPLAAEEMSVKSAWFLTIFSAVASLLLMIKLKCGLFLTCMYCCYLVIGAMYSVPPFRWKMNTFTSTLWNFSEIGIGINFLINYASRATLGLPFQWRPPFTFIIGFVSTLSIILSILKDVPDVEGDKKVGMSTLPVIFGARTIVLVGSGFFLLNYVAAIGVAIMWPQAFKGYIMIPAHAIFASALIFKTWLLDKANYAKEASDSYYHFLWFLMIAEYILYPFIST.

A chloroplast-targeting transit peptide spans 1-46; it reads MELSSACNLSLKPNYYYYPTSLFPSNNSYNNLKASSYYQTQRPIKC. A run of 9 helical transmembrane segments spans residues 119 to 139, 146 to 166, 193 to 213, 217 to 237, 257 to 277, 281 to 301, 326 to 346, 355 to 375, and 388 to 408; these read PIPFVAVSIICTSLFGAELLK, WQLMFDAFQGLVVILLYHIYI, SVKSAWFLTIFSAVASLLLMI, CGLFLTCMYCCYLVIGAMYSV, IGIGINFLINYASRATLGLPF, PPFTFIIGFVSTLSIILSILK, IVLVGSGFFLLNYVAAIGVAI, YIMIPAHAIFASALIFKTWLL, and YYHFLWFLMIAEYILYPFIST.

Belongs to the UbiA prenyltransferase family. In terms of assembly, homo- and heteromer. Interacts with PT1L, forming a functional metabolon. Requires Mg(2+) as cofactor. As to expression, expressed in trichomes.

It localises to the plastid. It is found in the chloroplast membrane. It catalyses the reaction a 2-acyl-4-prenylphloroglucinol + dimethylallyl diphosphate = a 2-acyl-4,6-diprenylphloroglucinol + diphosphate. The catalysed reaction is a 2-acyl-4,6-diprenylphloroglucinol + dimethylallyl diphosphate = a 2-acyl-4,6,6-triprenylphloroglucinol + diphosphate. It participates in secondary metabolite biosynthesis. Functionally, involved in the biosynthesis of prenylated phenolics natural products which contribute to the bitter taste of beer and display broad biological activities. Catalyzes the two last prenylation steps in the beta-bitter acid pathway. Uses dimethylallyl diphosphate (DMAPP) as the prenyl donor. The chain is 2-acyl-4-prenylphloroglucinol 6-prenyltransferase, chloroplastic from Humulus lupulus (European hop).